Here is a 435-residue protein sequence, read N- to C-terminus: Probable protein arginine N-methyltransferase 6 (435 aa).

Residues 1-48 (MQSGGDFSNGFHGDHHRELELEDKQGPSLSSFGRAKKRSHAGARDPRG) form a disordered region. The span at 12–25 (HGDHHRELELEDKQ) shows a compositional bias: basic and acidic residues. Residues 80 to 418 (DVAYFHSYAH…KENKRFMNIH (339 aa)) enclose the SAM-dependent MTase PRMT-type domain. S-adenosyl-L-methionine contacts are provided by histidine 93, arginine 102, glycine 126, aspartate 148, and glutamate 177. Active-site residues include glutamate 191 and glutamate 200. Residues 333-377 (PAKNTSETSIASGSSSISPSGEVNQKKRTNPSDALVLSTSPESPP) are disordered. The span at 337 to 354 (TSETSIASGSSSISPSGE) shows a compositional bias: low complexity.

This sequence belongs to the class I-like SAM-binding methyltransferase superfamily. Protein arginine N-methyltransferase family. PRMT6 subfamily.

Its function is as follows. Arginine methyltransferase that can both catalyze the formation of omega-N monomethylarginine (MMA) and asymmetrical dimethylarginine (aDMA). This chain is Probable protein arginine N-methyltransferase 6 (PRMT6), found in Arabidopsis thaliana (Mouse-ear cress).